The primary structure comprises 54 residues: Rubredoxin (54 aa).

The region spanning 1–54 (MKKYVCVVCGYIYDPAEGDPDNGVNPGTSFEDIPDDWVCPLCGVGKDQFEPSEE) is the Rubredoxin-like domain. Fe cation-binding residues include Cys-6, Cys-9, Cys-39, and Cys-42.

The protein belongs to the rubredoxin family. Requires Fe(3+) as cofactor.

Rubredoxin is a small nonheme, iron protein lacking acid-labile sulfide. Its single Fe, chelated to 4 Cys, functions as an electron acceptor and may also stabilize the conformation of the molecule. Functions as an intermediate component in the electron transfer chain: NADH-&gt;NROR-&gt;Rd-&gt;FprA1/2 in which Rd serves as the proximal electron donor to the FDPs that exhibit H(2)O-forming NADH oxidase activity. Also functions as the proximal electron donor to the Dfx and revRbr proteins that display superoxide reductase (SOR) and NADH peroxidase activity, respectively. Therefore, is a key electron carrier in an efficient multienzyme complex that can scavenge O(2) and reactive oxygen species (ROS), and thus plays an important role in the oxidative stress defense system in C.acetobutylicum, an obligate anaerobic bacterium. This is Rubredoxin (rd) from Clostridium acetobutylicum (strain ATCC 824 / DSM 792 / JCM 1419 / IAM 19013 / LMG 5710 / NBRC 13948 / NRRL B-527 / VKM B-1787 / 2291 / W).